The sequence spans 199 residues: Recombination protein RecR (199 aa).

The C4-type zinc-finger motif lies at 58–73 (CSICNNITDVDPCTYC). Positions 81-176 (QVICVVEEPT…RVTRIATGVP (96 aa)) constitute a Toprim domain.

This sequence belongs to the RecR family.

In terms of biological role, may play a role in DNA repair. It seems to be involved in an RecBC-independent recombinational process of DNA repair. It may act with RecF and RecO. This Koribacter versatilis (strain Ellin345) protein is Recombination protein RecR.